The following is a 336-amino-acid chain: MIKIKNLKKYYGKELVINDVSLEIKKGEIYAIVGHSGAGKSTLLRCINGLENYQEGSLKVFDQEIKDLSQKKSKELRMLRKDIGMIFQNFALMERKNVFENVAMPLRTHYTQCKFHAKLFNKEYMSEKEIAQKVNSLLEIVGLDHKNKSYPRELSGGQKQRVAIARALALNPKILLSDEATSALDPNTTKNILELISKINAEFGITVVLVTHEMDVVKDIAQKALLLEHGQIIGSGAIDELFLRPNAKMKEFLGESDFLPEHGLNIKLYFPKEVAQNSVITHMARTLNIDFNIVWGKIEKLNGKALGNLVININEKDKDKVLDYIEKSGVLWEVAS.

One can recognise an ABC transporter domain in the interval 2–254 (IKIKNLKKYY…PNAKMKEFLG (253 aa)). An ATP-binding site is contributed by 34 to 41 (GHSGAGKS).

The protein belongs to the ABC transporter superfamily. Methionine importer (TC 3.A.1.24) family. As to quaternary structure, the complex is composed of two ATP-binding proteins (MetN), two transmembrane proteins (MetI) and a solute-binding protein (MetQ).

Its subcellular location is the cell inner membrane. It carries out the reaction L-methionine(out) + ATP + H2O = L-methionine(in) + ADP + phosphate + H(+). The catalysed reaction is D-methionine(out) + ATP + H2O = D-methionine(in) + ADP + phosphate + H(+). In terms of biological role, part of the ABC transporter complex MetNIQ involved in methionine import. Responsible for energy coupling to the transport system. This chain is Methionine import ATP-binding protein MetN, found in Campylobacter jejuni subsp. jejuni serotype O:2 (strain ATCC 700819 / NCTC 11168).